The sequence spans 287 residues: AA9 family lytic polysaccharide monooxygenase D (287 aa).

The signal sequence occupies residues 1–17 (MKLSLLAAAAIAPMVSA). H18 provides a ligand contact to Cu(2+). A disulfide bond links C67 and C189. O2 is bound at residue H176. Y186 contacts Cu(2+). N-linked (GlcNAc...) asparagine glycans are attached at residues N220 and N250. A disordered region spans residues 239–287 (TGGSGSSTGSYNESNAEDSNEYPYQKESGTCQSNFYRREHARDFSHRRA). Residues 274-287 (YRREHARDFSHRRA) show a composition bias toward basic and acidic residues.

Belongs to the polysaccharide monooxygenase AA9 family. It depends on Cu(2+) as a cofactor.

The protein localises to the secreted. It carries out the reaction [(1-&gt;4)-beta-D-glucosyl]n+m + reduced acceptor + O2 = 4-dehydro-beta-D-glucosyl-[(1-&gt;4)-beta-D-glucosyl]n-1 + [(1-&gt;4)-beta-D-glucosyl]m + acceptor + H2O.. Lytic polysaccharide monooxygenase (LPMO) that depolymerizes crystalline and amorphous polysaccharides via the oxidation of scissile alpha- or beta-(1-4)-glycosidic bonds, yielding C1 oxidation products. Catalysis by LPMOs requires the reduction of the active-site copper from Cu(II) to Cu(I) by a reducing agent and H(2)O(2) or O(2) as a cosubstrate. Active on celluloseas as well as on the hemicellulose xyloglucan. Shows synergy with other hydrolases in degrading sorghum stover. In Emericella nidulans (strain FGSC A4 / ATCC 38163 / CBS 112.46 / NRRL 194 / M139) (Aspergillus nidulans), this protein is AA9 family lytic polysaccharide monooxygenase D.